The chain runs to 96 residues: Large ribosomal subunit protein uL23 (96 aa).

Belongs to the universal ribosomal protein uL23 family. As to quaternary structure, part of the 50S ribosomal subunit. Contacts protein L29, and trigger factor when it is bound to the ribosome.

Functionally, one of the early assembly proteins it binds 23S rRNA. One of the proteins that surrounds the polypeptide exit tunnel on the outside of the ribosome. Forms the main docking site for trigger factor binding to the ribosome. This is Large ribosomal subunit protein uL23 from Syntrophus aciditrophicus (strain SB).